The chain runs to 525 residues: WD repeat-containing protein JIP5 (525 aa).

WD repeat units lie at residues 28–69 (VFDE…RILN), 121–160 (RHKG…VMKK), 211–251 (HNGD…ESDA), 270–310 (QEDE…LVDQ), and 358–398 (RKHS…DDEE). The disordered stretch occupies residues 396–525 (DEEGKINESY…EHGIRKFEGL (130 aa)). The segment covering 410–424 (SDNDNGFDSDADSNS) has biased composition (acidic residues). The segment covering 425–435 (DSESVSSSDVD) has biased composition (low complexity). Over residues 463 to 484 (SKDELLAELEKDLQSSDEDSKH) the composition is skewed to basic and acidic residues. Basic residues predominate over residues 485–501 (YTKRTKSTQPKKLKKQK). A compositionally biased stretch (basic and acidic residues) spans 513-525 (QKHEHGIRKFEGL).

It belongs to the WD repeat WDR55 family.

It localises to the nucleus. It is found in the nucleolus. The protein is WD repeat-containing protein JIP5 (JIP5) of Kluyveromyces lactis (strain ATCC 8585 / CBS 2359 / DSM 70799 / NBRC 1267 / NRRL Y-1140 / WM37) (Yeast).